A 265-amino-acid chain; its full sequence is Pro-opiomelanocortin (265 aa).

The first 26 residues, 1–26 (MPRLCSSRSGALLLALLLQASMEVRG), serve as a signal peptide directing secretion. Disulfide bonds link cysteine 28–cysteine 50 and cysteine 34–cysteine 46. Residue threonine 71 is glycosylated (O-linked (GalNAc...) threonine). Phenylalanine 87 carries the post-translational modification Phenylalanine amide. Positions 89-138 (RRNGSSSSGVGGAAQKREEEVAVGEGPGPRGDDAETGPREDKRSYSMEHF) are disordered. N-linked (GlcNAc...) asparagine glycosylation is present at asparagine 91. Positions 106–129 (EEEVAVGEGPGPRGDDAETGPRED) are excised as a propeptide. Residues 118–138 (RGDDAETGPREDKRSYSMEHF) are compositionally biased toward basic and acidic residues. At serine 132 the chain carries N-acetylserine; in Corticotropin. Valine 144 carries the valine amide modification. Residue serine 162 is modified to Phosphoserine. At glutamate 173 the chain carries Pyrrolidone carboxylic acid (Glu); partial. Tyrosine 200 bears the Sulfotyrosine mark. The interval 209 to 240 (EAAEKKDSGPYKMEHFRWGSPPKDKRYGGFMT) is disordered. Over residues 210-235 (AAEKKDSGPYKMEHFRWGSPPKDKRY) the composition is skewed to basic and acidic residues.

This sequence belongs to the POMC family. In terms of processing, specific enzymatic cleavages at paired basic residues yield the different active peptides. As to expression, ACTH and MSH are produced by the pituitary gland.

The protein resides in the secreted. Stimulates the adrenal glands to release cortisol. In terms of biological role, anorexigenic peptide. Increases the pigmentation of skin by increasing melanin production in melanocytes. Its function is as follows. Endogenous orexigenic opiate. Functionally, endogenous opiate. This Bos taurus (Bovine) protein is Pro-opiomelanocortin (POMC).